Consider the following 242-residue polypeptide: Protein HTATIP2 (242 aa).

Ala-2 carries the N-acetylalanine modification. Residues 2-25 are required for interaction with elongation factor EEF1A1; the sequence is ADKETLLKLREDFKMQNKSVFILG. NADPH contacts are provided by Ser-27, Gly-28, Glu-29, Thr-30, Arg-52, Arg-53, Leu-92, Gly-93, Tyr-143, Lys-147, Leu-170, and Arg-178. The active-site Proton acceptor is the Tyr-143. Lys-147 is an active-site residue.

In terms of assembly, monomer. Forms homodimers during oxidative stress. Interacts (via N-terminus) with elongation factor EEF1A1 (via middle-region); the interaction is direct and competes with EEF1A1 binding to guanyl-nucleotide exchange factor EEF1B2, thereby inhibiting GDP for GTP exchange and reactivation of EEF1A1. Interacts with nuclear transport receptors XPO4, IPO5/RANBP5, IPO7, IPO9 and KPNB1 as well as GCN1L1/GCN1 and LRPPRC probably through their HEAT repeats. Binds NCOA5/CIA.

In terms of biological role, represses translation by preventing reactivation of elongation factor eEF1A. May also inhibit nuclear import by competing with nuclear import substrates for binding to a subset of nuclear transport receptors. Has additionally been proposed to act as a redox sensor involved in cellular oxidative stress surveillance. May bind NADPH. This is Protein HTATIP2 from Rattus norvegicus (Rat).